Consider the following 299-residue polypeptide: Ribosomal protein L11 methyltransferase (299 aa).

S-adenosyl-L-methionine-binding residues include threonine 140, glycine 161, aspartate 183, and asparagine 232.

Belongs to the methyltransferase superfamily. PrmA family.

It localises to the cytoplasm. It catalyses the reaction L-lysyl-[protein] + 3 S-adenosyl-L-methionine = N(6),N(6),N(6)-trimethyl-L-lysyl-[protein] + 3 S-adenosyl-L-homocysteine + 3 H(+). Methylates ribosomal protein L11. This Synechococcus elongatus (strain ATCC 33912 / PCC 7942 / FACHB-805) (Anacystis nidulans R2) protein is Ribosomal protein L11 methyltransferase.